Reading from the N-terminus, the 90-residue chain is Putative regulatory protein NT01CX_2250 (90 aa).

The protein belongs to the RemA family.

The sequence is that of Putative regulatory protein NT01CX_2250 from Clostridium novyi (strain NT).